We begin with the raw amino-acid sequence, 159 residues long: MAEEKEVVLTKEGLEKLENELEHLKSVKREEVAERIKQAIAFGDITENSEYEDAKNEQAFIEGRIISLEKTLKKARLMEDEDIRTDVVSLGSRITLKEMKSGREVTVTLVSSVESKLKDGKISDESPVGKAIMGKKVKSTVSVEAPAGTIKYKIIKVEK.

Residues 1-76 adopt a coiled-coil conformation; it reads MAEEKEVVLT…SLEKTLKKAR (76 aa).

This sequence belongs to the GreA/GreB family.

In terms of biological role, necessary for efficient RNA polymerase transcription elongation past template-encoded arresting sites. The arresting sites in DNA have the property of trapping a certain fraction of elongating RNA polymerases that pass through, resulting in locked ternary complexes. Cleavage of the nascent transcript by cleavage factors such as GreA or GreB allows the resumption of elongation from the new 3'terminus. GreA releases sequences of 2 to 3 nucleotides. This chain is Transcription elongation factor GreA, found in Syntrophomonas wolfei subsp. wolfei (strain DSM 2245B / Goettingen).